The chain runs to 327 residues: Phenylalanine--tRNA ligase alpha subunit (327 aa).

E252 is a Mg(2+) binding site.

This sequence belongs to the class-II aminoacyl-tRNA synthetase family. Phe-tRNA synthetase alpha subunit type 1 subfamily. As to quaternary structure, tetramer of two alpha and two beta subunits. Requires Mg(2+) as cofactor.

It is found in the cytoplasm. It catalyses the reaction tRNA(Phe) + L-phenylalanine + ATP = L-phenylalanyl-tRNA(Phe) + AMP + diphosphate + H(+). In Shewanella putrefaciens (strain CN-32 / ATCC BAA-453), this protein is Phenylalanine--tRNA ligase alpha subunit.